Consider the following 499-residue polypeptide: U4/U6 small nuclear ribonucleoprotein Prp31 (499 aa).

The segment at Met1–Glu37 is disordered. The segment covering Leu7–Glu37 has biased composition (acidic residues). Coiled coils occupy residues Glu85–Lys120 and Glu181–Ile215. The region spanning Ile215–Glu333 is the Nop domain. The interval Pro334 to Arg357 is disordered. A Nuclear localization signal (NLS) motif is present at residues Arg351 to Glu364. Phosphoserine occurs at positions 379, 395, and 432. Lys438 is subject to N6-acetyllysine. Ser439 carries the phosphoserine modification. Phosphothreonine is present on Thr440. Position 450 is a phosphoserine (Ser450). Position 455 is a phosphothreonine (Thr455). Glycyl lysine isopeptide (Lys-Gly) (interchain with G-Cter in SUMO2) cross-links involve residues Lys471 and Lys478.

Belongs to the PRP31 family. In terms of assembly, identified in the spliceosome B complex. Component of the U4/U6-U5 tri-snRNP complex composed of the U4, U6 and U5 snRNAs and at least PRPF3, PRPF4, PRPF6, PRPF8, PRPF31, SNRNP200, TXNL4A, SNRNP40, DDX23, CD2BP2, PPIH, SNU13, EFTUD2, SART1 and USP39. Interacts with a complex formed by SNU13 and U4 snRNA, but not with SNU13 or U4 snRNA alone. The complex formed by SNU13 and PRPF31 also binds U4atac snRNA, a characteristic component of specific, less abundant spliceosomal complexes. Interacts with PRPF6/U5 snRNP-associated 102 kDa protein. Component of some MLL1/MLL complex, at least composed of the core components KMT2A/MLL1, ASH2L, HCFC1/HCF1, WDR5 and RBBP5, as well as the facultative components BACC1, CHD8, E2F6, HSP70, INO80C, KANSL1, LAS1L, MAX, MCRS1, MGA, KAT8/MOF, PELP1, PHF20, PRP31, RING2, RUVB1/TIP49A, RUVB2/TIP49B, SENP3, TAF1, TAF4, TAF6, TAF7, TAF9 and TEX10. Interacts (via its NLS) with CTNNBL1. Interacts with USH1G. Post-translationally, phosphorylated by PRP4K during spliceosome assembly. In terms of tissue distribution, ubiquitously expressed.

The protein localises to the nucleus. It is found in the nucleus speckle. Its subcellular location is the cajal body. Its function is as follows. Involved in pre-mRNA splicing as component of the spliceosome. Required for the assembly of the U4/U5/U6 tri-snRNP complex, one of the building blocks of the spliceosome. The chain is U4/U6 small nuclear ribonucleoprotein Prp31 from Homo sapiens (Human).